A 255-amino-acid chain; its full sequence is 4-hydroxy-tetrahydrodipicolinate reductase (255 aa).

Residues 9 to 14, Asp-35, 89 to 91, and 115 to 118 each bind NAD(+); these read GFKGKM, GTT, and APNF. His-145 (proton donor/acceptor) is an active-site residue. Position 146 (His-146) interacts with (S)-2,3,4,5-tetrahydrodipicolinate. Lys-149 (proton donor) is an active-site residue. Position 155–156 (155–156) interacts with (S)-2,3,4,5-tetrahydrodipicolinate; that stretch reads GT.

Belongs to the DapB family.

It localises to the cytoplasm. The enzyme catalyses (S)-2,3,4,5-tetrahydrodipicolinate + NAD(+) + H2O = (2S,4S)-4-hydroxy-2,3,4,5-tetrahydrodipicolinate + NADH + H(+). The catalysed reaction is (S)-2,3,4,5-tetrahydrodipicolinate + NADP(+) + H2O = (2S,4S)-4-hydroxy-2,3,4,5-tetrahydrodipicolinate + NADPH + H(+). It participates in amino-acid biosynthesis; L-lysine biosynthesis via DAP pathway; (S)-tetrahydrodipicolinate from L-aspartate: step 4/4. Functionally, catalyzes the conversion of 4-hydroxy-tetrahydrodipicolinate (HTPA) to tetrahydrodipicolinate. This is 4-hydroxy-tetrahydrodipicolinate reductase from Streptococcus pneumoniae serotype 19F (strain G54).